A 69-amino-acid polypeptide reads, in one-letter code: Sperm protamine P1 (69 aa).

The segment at 1-69 (MASYRNSRSR…RKRNNNTENK (69 aa)) is disordered. Composition is skewed to basic residues over residues 7–25 (SRSR…RSRV) and 34–63 (RSSR…RKRN).

This sequence belongs to the protamine P1 family. Testis.

The protein localises to the nucleus. It is found in the chromosome. Protamines substitute for histones in the chromatin of sperm during the haploid phase of spermatogenesis. They compact sperm DNA into a highly condensed, stable and inactive complex. The chain is Sperm protamine P1 (PRM1) from Perameles gunnii (Eastern barred bandicoot).